Consider the following 372-residue polypeptide: Anhydro-N-acetylmuramic acid kinase (372 aa).

An ATP-binding site is contributed by 21-28 (GTSMDGVD).

The protein belongs to the anhydro-N-acetylmuramic acid kinase family.

The catalysed reaction is 1,6-anhydro-N-acetyl-beta-muramate + ATP + H2O = N-acetyl-D-muramate 6-phosphate + ADP + H(+). It functions in the pathway amino-sugar metabolism; 1,6-anhydro-N-acetylmuramate degradation. It participates in cell wall biogenesis; peptidoglycan recycling. Catalyzes the specific phosphorylation of 1,6-anhydro-N-acetylmuramic acid (anhMurNAc) with the simultaneous cleavage of the 1,6-anhydro ring, generating MurNAc-6-P. Is required for the utilization of anhMurNAc either imported from the medium or derived from its own cell wall murein, and thus plays a role in cell wall recycling. The protein is Anhydro-N-acetylmuramic acid kinase of Bordetella avium (strain 197N).